The sequence spans 523 residues: Solute carrier family 2, facilitated glucose transporter member 2 (523 aa).

Over 1 to 10 (MSEDKITGTL) the chain is Cytoplasmic. The helical transmembrane segment at 11–31 (AFTVFTAVLSSFQFGYDIGVI) threads the bilayer. Topologically, residues 32-97 (NAPQEVIISH…SAHIVTMLWS (66 aa)) are extracellular. N-linked (GlcNAc...) asparagine glycosylation is present at Asn62. Residues 98–118 (LSVSSFAVGGMVASFFGGWLG) traverse the membrane as a helical segment. The Cytoplasmic segment spans residues 119 to 126 (DKLGRIKA). Residues 127-147 (MLAANSLSLTGALLMGCSKFG) traverse the membrane as a helical segment. The Extracellular portion of the chain corresponds to 148–157 (PAHALIIAGR). A helical transmembrane segment spans residues 158–178 (SVSGLYCGLISGLVPMYIGEI). Residues 179 to 186 (APTTLRGA) lie on the Cytoplasmic side of the membrane. Residues 187–207 (LGTLHQLALVTGILISQIAGL) traverse the membrane as a helical segment. Residue Gln192 participates in D-glucose binding. The Extracellular portion of the chain corresponds to 208–216 (SFILGNQDH). Residues 217–237 (WHILLGLSAVPALLQCLLLLF) form a helical membrane-spanning segment. Over 238–302 (CPESPRYLYI…LFTDANYRQP (65 aa)) the chain is Cytoplasmic. A helical transmembrane segment spans residues 303–323 (ILVALMLHMAQQFSGINGIFY). Residues 313–314 (QQ) and Asn319 each bind D-glucose. Residues 324-337 (YSTSIFQTAGISQP) lie on the Extracellular side of the membrane. The chain crosses the membrane as a helical span at residues 338–358 (VYATIGVGAINMIFTAVSVLL). Asn348 is a D-glucose binding site. Over 359-367 (VEKAGRRTL) the chain is Cytoplasmic. Residues 368–388 (FLTGMIGMFFCTIFMSVGLVL) form a helical membrane-spanning segment. At 389 to 401 (LDKFAWMSYVSMT) the chain is on the extracellular side. The helical transmembrane segment at 402–422 (AIFLFVSFFEIGPGPIPWFMV) threads the bilayer. 2 residues coordinate D-glucose: Glu411 and Trp419. Over 423 to 432 (AEFFSQGPRP) the chain is Cytoplasmic. Residues 433 to 453 (TALALAAFSNWVCNFVIALCF) traverse the membrane as a helical segment. Residues 454–460 (QYIADFL) lie on the Extracellular side of the membrane. The helical transmembrane segment at 461-481 (GPYVFFLFAGVVLVFTLFTFF) threads the bilayer. Residues 482–523 (KVPETKGKSFEEIAAEFRKKSGSAPPRKAAVQMEFLASSESV) lie on the Cytoplasmic side of the membrane. The residue at position 522 (Ser522) is a Phosphoserine.

This sequence belongs to the major facilitator superfamily. Sugar transporter (TC 2.A.1.1) family. Glucose transporter subfamily. In terms of processing, N-glycosylated; required for stability and retention at the cell surface of pancreatic beta cells. In terms of tissue distribution, in embryo, expressed in endoderm layer of yolk sac and liver primordium.

The protein localises to the cell membrane. It catalyses the reaction D-glucose(out) = D-glucose(in). It carries out the reaction D-fructose(out) = D-fructose(in). The catalysed reaction is L-dehydroascorbate(out) = L-dehydroascorbate(in). The enzyme catalyses D-galactose(in) = D-galactose(out). Its activity is regulated as follows. D-glucose and maltose competitively inhibit fructose transport. D-glucose, D-fructose and maltose inhibit deoxyglucose transport. Its function is as follows. Facilitative hexose transporter that mediates the transport of glucose, fructose and galactose. Likely mediates the bidirectional transfer of glucose across the plasma membrane of hepatocytes and is responsible for uptake of glucose by the beta cells; may comprise part of the glucose-sensing mechanism of the beta cell. May also participate with the Na(+)/glucose cotransporter in the transcellular transport of glucose in the small intestine and kidney. Also able to mediate the transport of dehydroascorbate. This Mus musculus (Mouse) protein is Solute carrier family 2, facilitated glucose transporter member 2.